We begin with the raw amino-acid sequence, 979 residues long: Receptor-type tyrosine-protein phosphatase-like N (979 aa).

A signal peptide spans 1 to 37 (MRRPRRPGGSGGSGGSGGLRLLVCLLLLSGRPGGCSA). An RESP18 homology domain region spans residues 38–134 (ISAHGCLFDR…HPRDRSGLVP (97 aa)). Residues 38–575 (ISAHGCLFDR…RQAHGISPMR (538 aa)) lie on the Lumenal side of the membrane. C56 and C65 are oxidised to a cystine. A compositionally biased stretch (basic and acidic residues) spans 113-130 (MERIPRLRPPEPHPRDRS). 3 disordered regions span residues 113–173 (MERI…GSPL), 289–330 (GRAR…AAQP), and 392–443 (MQRG…SSSV). A compositionally biased stretch (polar residues) spans 145–155 (TQGNPTGSSPA). The span at 303–322 (RAEDSSEGHEEEVLGGRGEK) shows a compositional bias: basic and acidic residues. A phosphoserine mark is found at S307 and S308. Residues 414–424 (SPASSEVQQVL) show a composition bias toward polar residues. Residues 449 to 575 (SPLGQSQPTV…RQAHGISPMR (127 aa)) are sufficient for dimerization of proICA512. Residues N506 and N524 are each glycosylated (N-linked (GlcNAc...) asparagine). A helical transmembrane segment spans residues 576–600 (SVLLTLVALAGVAGLLVALAVALCM). Residues 601-732 (RHHSRQRDKE…PNTCAAAQDE (132 aa)) are sufficient for dimerization of proICA512. The Cytoplasmic segment spans residues 601 to 979 (RHHSRQRDKE…VNAILKALPQ (379 aa)). The segment at 644-680 (RAEGQPEPSRVSSVSSQFSDAAQASPSSHSSTPSWCE) is disordered. Low complexity predominate over residues 648–677 (QPEPSRVSSVSSQFSDAAQASPSSHSSTPS). The Tyrosine-protein phosphatase domain occupies 709 to 969 (LAKEWQALCA…EFALTAVAEE (261 aa)). K754 participates in a covalent cross-link: Glycyl lysine isopeptide (Lys-Gly) (interchain with G-Cter in SUMO).

The protein belongs to the protein-tyrosine phosphatase family. Receptor class 8 subfamily. In terms of assembly, homodimer; shown for the unprocessed protein (proICA512) in the endoplasmic reticulum and resolved during protein maturation as ICA512-TMF seems to be predominantly monomeric in secretory granules; however, ICA512-CCF interacts with ICA512-TMF disrupting the ICA512-TMF:SNTB2 complex. The isolated lumenal RESP18 homology domain has been shown to form disulfide-linked homooligomers. Interacts (via cytoplasmic domain) with phosphorylated SNTB2; this protects PTPRN against cleavage by CAPN1 to produce ICA512-CCF. Dephosphorylation of SNTB2 upon insulin stimulation disrupts the interaction and results in PTPRN cleavage. Interacts with SNX19. ICA512-CCF interacts with PIAS4; in the nucleus. Interacts with STAT5B (phosphorylated); down-regulated by ICA512-CCF sumoylation; ICA512-CCF prevents STAT5B dephosphorylation; ICA512-CCF mediates interaction of STAT5B with PIAS4. Interacts (via RESP18 homology domain) with insulin and proinsulin. Interacts with PTPRN2, PTPRA and PTPRE. Subject to proteolytic cleavage at multiple sites. Subject to cleavage on a pair of basic residues. On exocytosis of secretory granules in pancreatic beta-cells ICA512-TMF is transiently inserted in the plasma-membrane and cleaved by mu-type calpain CPN1 to yield ICA512-CCF. Post-translationally, O-glycosylated. In terms of processing, N-glycosylated. Sumoylated at two sites including Lys-754. Sumoylation decreases interaction with STAT5. Detected in pituitary. Detected in brain (at protein level). Detected in brain. Weakly expressed in the colon, intestine, stomach and pancreas.

The protein resides in the membrane. It localises to the cytoplasmic vesicle. The protein localises to the secretory vesicle membrane. Its subcellular location is the perikaryon. It is found in the cell projection. The protein resides in the axon. It localises to the synapse. The protein localises to the cell membrane. Its subcellular location is the endosome. It is found in the nucleus. In terms of biological role, plays a role in vesicle-mediated secretory processes. Required for normal accumulation of secretory vesicles in hippocampus, pituitary and pancreatic islets. Required for the accumulation of normal levels of insulin-containing vesicles and preventing their degradation. Plays a role in insulin secretion in response to glucose stimuli. Required for normal accumulation of the neurotransmitters norepinephrine, dopamine and serotonin in the brain. In females, but not in males, required for normal accumulation and secretion of pituitary hormones, such as luteinizing hormone (LH) and follicle-stimulating hormone (FSH). Seems to lack intrinsic enzyme activity. Required to maintain normal levels of renin expression and renin release. May regulate catalytic active protein-tyrosine phosphatases such as PTPRA through dimerization. Its function is as follows. ICA512-TMF regulates dynamics and exocytosis of insulin secretory granules (SGs); binding of ICA512-TMF to SNTB2/beta-2-syntrophin is proposed to restrain SGs mobility and exocytosis by tethering them to the actin cytoskeleton depending on UTRN; the function is inhibited by cytoplasmic ICA512-CFF dimerizing with ICA512-TMF and displacing SNTB2. Functionally, ICA512-CCF translocated to the nucleus promotes expression of insulin and other granule-related genes; the function implicates binding to and regulating activity of STAT5B probably by preventing its dephosphorylation and potentially by inducing its sumoylation by recruiting PIAS4. Enhances pancreatic beta-cell proliferation by converging with signaling by STAT5B and STAT3. ICA512-CCF located in the cytoplasm regulates dynamics and exocytosis of insulin secretory granules (SGs) by dimerizing with ICA512-TMF and displacing SNTB2 thus enhancing SGs mobility and exocytosis. In Mus musculus (Mouse), this protein is Receptor-type tyrosine-protein phosphatase-like N (Ptprn).